Consider the following 320-residue polypeptide: Serpentine receptor class gamma-17 (320 aa).

Transmembrane regions (helical) follow at residues 25 to 45, 80 to 100, 155 to 175, 192 to 212, 237 to 257, and 268 to 288; these read AIYF…ISLL, IFFG…STFF, FIML…QVIA, WASL…FTIV, FTSI…LTFA, and YILQ…IMFL.

This sequence belongs to the nematode receptor-like protein srg family.

It is found in the membrane. This chain is Serpentine receptor class gamma-17 (srg-17), found in Caenorhabditis elegans.